The chain runs to 88 residues: Small ribosomal subunit protein uS17 (88 aa).

The protein belongs to the universal ribosomal protein uS17 family. As to quaternary structure, part of the 30S ribosomal subunit.

In terms of biological role, one of the primary rRNA binding proteins, it binds specifically to the 5'-end of 16S ribosomal RNA. The protein is Small ribosomal subunit protein uS17 of Hahella chejuensis (strain KCTC 2396).